A 172-amino-acid chain; its full sequence is Photosystem I assembly protein Ycf3 (172 aa).

TPR repeat units lie at residues 35–68 (AFSY…EVDA), 72–105 (SYIL…NPSL), and 120–153 (GEQA…APTN).

It belongs to the Ycf3 family.

It is found in the plastid. Its subcellular location is the chloroplast thylakoid membrane. Its function is as follows. Essential for the assembly of the photosystem I (PSI) complex. May act as a chaperone-like factor to guide the assembly of the PSI subunits. The sequence is that of Photosystem I assembly protein Ycf3 from Chlamydomonas reinhardtii (Chlamydomonas smithii).